A 700-amino-acid polypeptide reads, in one-letter code: Acyl-coenzyme A oxidase 2 (700 aa).

This sequence belongs to the acyl-CoA oxidase family. As to quaternary structure, heteropentamer composed of five different subunits. Requires FAD as cofactor.

It is found in the peroxisome. It carries out the reaction a 2,3-saturated acyl-CoA + O2 = a (2E)-enoyl-CoA + H2O2. It participates in lipid metabolism; peroxisomal fatty acid beta-oxidation. Functionally, oxidizes strain chain acyl-CoAs with a chain length of 10 to 14 carbons. Also active toward the 2S isomers of acyl-CoA-esters containing a 2-methyl group. This Yarrowia lipolytica (strain CLIB 122 / E 150) (Yeast) protein is Acyl-coenzyme A oxidase 2 (POX2).